Consider the following 348-residue polypeptide: Probable UDP-arabinopyranose mutase 5 (348 aa).

The DXD motif motif lies at 100 to 102 (DDD). Arg148 is a glycosylation site (N-linked (Glc...) arginine).

The protein belongs to the RGP family. Heteromers with RGP1 and RGP2. Mn(2+) is required as a cofactor. Mg(2+) serves as cofactor. In terms of processing, reversibly glycosylated in vitro by UDP-glucose, UDP-xylose and UDP-galactose, but not UDP-mannose. As to expression, widely expressed at low levels.

The protein resides in the cytoplasm. Its subcellular location is the cytosol. The protein localises to the golgi apparatus. It catalyses the reaction UDP-beta-L-arabinofuranose = UDP-beta-L-arabinopyranose. Its function is as follows. Probable UDP-L-arabinose mutase involved in the biosynthesis of cell wall non-cellulosic polysaccharides. This Arabidopsis thaliana (Mouse-ear cress) protein is Probable UDP-arabinopyranose mutase 5.